Consider the following 87-residue polypeptide: Large ribosomal subunit protein bL27 (87 aa).

It belongs to the bacterial ribosomal protein bL27 family.

The sequence is that of Large ribosomal subunit protein bL27 from Stenotrophomonas maltophilia (strain R551-3).